The chain runs to 373 residues: Queuine tRNA-ribosyltransferase (373 aa).

The active-site Proton acceptor is Asp90. Substrate contacts are provided by residues 90-94 (DSGGF), Asp144, Gln193, and Gly220. Residues 251–257 (GVGTPED) are RNA binding. The active-site Nucleophile is Asp270. Residues 275-279 (TRNAR) are RNA binding; important for wobble base 34 recognition. Zn(2+)-binding residues include Cys308, Cys310, Cys313, and His339.

This sequence belongs to the queuine tRNA-ribosyltransferase family. In terms of assembly, homodimer. Within each dimer, one monomer is responsible for RNA recognition and catalysis, while the other monomer binds to the replacement base PreQ1. It depends on Zn(2+) as a cofactor.

The enzyme catalyses 7-aminomethyl-7-carbaguanine + guanosine(34) in tRNA = 7-aminomethyl-7-carbaguanosine(34) in tRNA + guanine. It participates in tRNA modification; tRNA-queuosine biosynthesis. In terms of biological role, catalyzes the base-exchange of a guanine (G) residue with the queuine precursor 7-aminomethyl-7-deazaguanine (PreQ1) at position 34 (anticodon wobble position) in tRNAs with GU(N) anticodons (tRNA-Asp, -Asn, -His and -Tyr). Catalysis occurs through a double-displacement mechanism. The nucleophile active site attacks the C1' of nucleotide 34 to detach the guanine base from the RNA, forming a covalent enzyme-RNA intermediate. The proton acceptor active site deprotonates the incoming PreQ1, allowing a nucleophilic attack on the C1' of the ribose to form the product. After dissociation, two additional enzymatic reactions on the tRNA convert PreQ1 to queuine (Q), resulting in the hypermodified nucleoside queuosine (7-(((4,5-cis-dihydroxy-2-cyclopenten-1-yl)amino)methyl)-7-deazaguanosine). The chain is Queuine tRNA-ribosyltransferase from Campylobacter jejuni subsp. jejuni serotype O:6 (strain 81116 / NCTC 11828).